Consider the following 411-residue polypeptide: LL-diaminopimelate aminotransferase (411 aa).

Y15 and G42 together coordinate substrate. Pyridoxal 5'-phosphate is bound by residues Y72, 108 to 109 (SK), Y132, N187, Y218, and 246 to 248 (SFS). Substrate is bound by residues K109, Y132, and N187. K249 is subject to N6-(pyridoxal phosphate)lysine. The pyridoxal 5'-phosphate site is built by R257 and N292. Substrate-binding residues include N292 and R388.

The protein belongs to the class-I pyridoxal-phosphate-dependent aminotransferase family. LL-diaminopimelate aminotransferase subfamily. Homodimer. Pyridoxal 5'-phosphate is required as a cofactor.

The enzyme catalyses (2S,6S)-2,6-diaminopimelate + 2-oxoglutarate = (S)-2,3,4,5-tetrahydrodipicolinate + L-glutamate + H2O + H(+). It participates in amino-acid biosynthesis; L-lysine biosynthesis via DAP pathway; LL-2,6-diaminopimelate from (S)-tetrahydrodipicolinate (aminotransferase route): step 1/1. Its function is as follows. Involved in the synthesis of meso-diaminopimelate (m-DAP or DL-DAP), required for both lysine and peptidoglycan biosynthesis. Catalyzes the direct conversion of tetrahydrodipicolinate to LL-diaminopimelate. This Synechococcus elongatus (strain ATCC 33912 / PCC 7942 / FACHB-805) (Anacystis nidulans R2) protein is LL-diaminopimelate aminotransferase.